The following is a 444-amino-acid chain: Orexin receptor type 2 (444 aa).

Positions 1–10 are enriched in basic and acidic residues; the sequence is MSGTKLEDSP. A disordered region spans residues 1–30; that stretch reads MSGTKLEDSPPCRNWSSAPELNETQEPFLN. Residues 1–54 lie on the Extracellular side of the membrane; that stretch reads MSGTKLEDSPPCRNWSSAPELNETQEPFLNPTDYDDEEFLRYLWREYLHPKEYE. N-linked (GlcNAc...) asparagine glycosylation is found at Asn-14 and Asn-22. Residues 14–27 show a composition bias toward polar residues; sequence NWSSAPELNETQEP. The required for response to orexin-A stretch occupies residues 33–49; the sequence is DYDDEEFLRYLWREYLH. The chain crosses the membrane as a helical span at residues 55–75; the sequence is WVLIAGYIIVFVVALVGNVLV. Residues 76–88 lie on the Cytoplasmic side of the membrane; that stretch reads CVAVWKNHHMRTV. The helical transmembrane segment at 89 to 110 threads the bilayer; the sequence is TNYFIVNLSLADVLVTITCLPA. Topologically, residues 111–127 are extracellular; the sequence is TLVVDITETWFFGQSLC. Residues Cys-127 and Cys-210 are joined by a disulfide bond. Residues 128–150 form a helical membrane-spanning segment; the sequence is KVIPYLQTVSVSVSVLTLSCIAL. Residues 151–170 are Cytoplasmic-facing; the sequence is DRWYAICHPLMFKSTAKRAR. The chain crosses the membrane as a helical span at residues 171–191; it reads NSIVIIWIVSCIIMIPQAIVM. Residues 192–222 lie on the Extracellular side of the membrane; sequence ECSTMLPGLANKTTLFTVCDERWGGEIYPKM. Asn-202 carries an N-linked (GlcNAc...) asparagine glycan. The helical transmembrane segment at 223–243 threads the bilayer; that stretch reads YHICFFLVTYMAPLCLMVLAY. Residues 244 to 304 are Cytoplasmic-facing; the sequence is LQIFRKLWCR…QIRARRKTAR (61 aa). A helical transmembrane segment spans residues 305-326; it reads MLMVVLLVFAICYLPISILNVL. The Extracellular segment spans residues 327 to 342; sequence KRVFGMFTHTEDRETV. The helical transmembrane segment at 343–366 threads the bilayer; it reads YAWFTFSHWLVYANSAANPIIYNF. The Cytoplasmic segment spans residues 367–444; that stretch reads LSGKFREEFK…ANGAGPLQNW (78 aa).

This sequence belongs to the G-protein coupled receptor 1 family.

It localises to the cell membrane. Its function is as follows. Nonselective, high-affinity receptor for both orexin-A and orexin-B neuropeptides. Triggers an increase in cytoplasmic Ca(2+) levels in response to orexin-A binding. The polypeptide is Orexin receptor type 2 (HCRTR2) (Canis lupus familiaris (Dog)).